We begin with the raw amino-acid sequence, 304 residues long: Phosphatidylserine decarboxylase proenzyme (304 aa).

Catalysis depends on charge relay system; for autoendoproteolytic cleavage activity residues aspartate 90, histidine 147, and serine 253. Serine 253 serves as the catalytic Schiff-base intermediate with substrate; via pyruvic acid; for decarboxylase activity. Serine 253 carries the pyruvic acid (Ser); by autocatalysis modification.

The protein belongs to the phosphatidylserine decarboxylase family. PSD-B subfamily. Prokaryotic type I sub-subfamily. Heterodimer of a large membrane-associated beta subunit and a small pyruvoyl-containing alpha subunit. The cofactor is pyruvate. Post-translationally, is synthesized initially as an inactive proenzyme. Formation of the active enzyme involves a self-maturation process in which the active site pyruvoyl group is generated from an internal serine residue via an autocatalytic post-translational modification. Two non-identical subunits are generated from the proenzyme in this reaction, and the pyruvate is formed at the N-terminus of the alpha chain, which is derived from the carboxyl end of the proenzyme. The autoendoproteolytic cleavage occurs by a canonical serine protease mechanism, in which the side chain hydroxyl group of the serine supplies its oxygen atom to form the C-terminus of the beta chain, while the remainder of the serine residue undergoes an oxidative deamination to produce ammonia and the pyruvoyl prosthetic group on the alpha chain. During this reaction, the Ser that is part of the protease active site of the proenzyme becomes the pyruvoyl prosthetic group, which constitutes an essential element of the active site of the mature decarboxylase.

The protein localises to the cell membrane. It catalyses the reaction a 1,2-diacyl-sn-glycero-3-phospho-L-serine + H(+) = a 1,2-diacyl-sn-glycero-3-phosphoethanolamine + CO2. It functions in the pathway phospholipid metabolism; phosphatidylethanolamine biosynthesis; phosphatidylethanolamine from CDP-diacylglycerol: step 2/2. In terms of biological role, catalyzes the formation of phosphatidylethanolamine (PtdEtn) from phosphatidylserine (PtdSer). This chain is Phosphatidylserine decarboxylase proenzyme, found in Dickeya dadantii (strain 3937) (Erwinia chrysanthemi (strain 3937)).